Reading from the N-terminus, the 185-residue chain is HTH-type transcriptional regulator SACOL2593 (185 aa).

The region spanning 6 to 66 is the HTH tetR-type domain; it reads KENRQRIEEI…YVIQRDLDIF (61 aa). The H-T-H motif DNA-binding region spans 29 to 48; it reads SMNRIAKELGIGMGTLYRHF.

This chain is HTH-type transcriptional regulator SACOL2593, found in Staphylococcus aureus (strain COL).